The following is a 406-amino-acid chain: Probable sodium/metabolite cotransporter BASS1, chloroplastic (406 aa).

A chloroplast-targeting transit peptide spans 1–64 (MPLLRRPPAA…RHLCGIPSSR (64 aa)). 9 helical membrane passes run 98–118 (VGEVLSLGFPVWVASACAVAL), 123–143 (AFLWVSPMAQIVGISFTMLGM), 152–172 (LKTALLMPKELASGFLLQYSV), 187–209 (PSYYAAGLILVSCCPGGTASNIV), 217–237 (VALSVLMTAASTFAAAFLTPL), 252–272 (MGLFVSTSQVVLAPVLLGALL), 278–298 (GLVQLVSPLMPFIAVATVAVL), 315–335 (LQVVMSVCWLHASGFFFGYVL), and 376–396 (VPCAVSSVCHSVYGSLLAGIW).

The protein belongs to the bile acid:sodium symporter (BASS) (TC 2.A.28) family.

The protein localises to the membrane. Its subcellular location is the plastid. It localises to the chloroplast envelope. Functionally, may function as sodium-coupled metabolite transporter across the chloroplast envelope. This chain is Probable sodium/metabolite cotransporter BASS1, chloroplastic (BASS1), found in Oryza sativa subsp. japonica (Rice).